We begin with the raw amino-acid sequence, 203 residues long: N-(5'-phosphoribosyl)anthranilate isomerase (203 aa).

It belongs to the TrpF family.

It catalyses the reaction N-(5-phospho-beta-D-ribosyl)anthranilate = 1-(2-carboxyphenylamino)-1-deoxy-D-ribulose 5-phosphate. It functions in the pathway amino-acid biosynthesis; L-tryptophan biosynthesis; L-tryptophan from chorismate: step 3/5. The sequence is that of N-(5'-phosphoribosyl)anthranilate isomerase from Listeria innocua serovar 6a (strain ATCC BAA-680 / CLIP 11262).